A 1368-amino-acid polypeptide reads, in one-letter code: DNA-directed RNA polymerase subunit beta (1368 aa).

It belongs to the RNA polymerase beta chain family. As to quaternary structure, the RNAP catalytic core consists of 2 alpha, 1 beta, 1 beta' and 1 omega subunit. When a sigma factor is associated with the core the holoenzyme is formed, which can initiate transcription.

The enzyme catalyses RNA(n) + a ribonucleoside 5'-triphosphate = RNA(n+1) + diphosphate. In terms of biological role, DNA-dependent RNA polymerase catalyzes the transcription of DNA into RNA using the four ribonucleoside triphosphates as substrates. This chain is DNA-directed RNA polymerase subunit beta, found in Janthinobacterium sp. (strain Marseille) (Minibacterium massiliensis).